The following is a 669-amino-acid chain: 5-taurinomethyluridine-[tRNA] synthase subunit MTO1, mitochondrial (669 aa).

Residues 1 to 25 constitute a mitochondrion transit peptide; sequence MFLLRGRGHWAAASLGRRLPLRRLR. Residues 42-47, valine 154, serine 217, and glutamine 406 contribute to the FAD site; that span reads GGGHAG. At lysine 507 the chain carries N6-methyllysine.

Belongs to the MnmG family. In terms of assembly, homodimer; forms a dimer in the presence of potassium. Interacts with GTPBP3; forms the GTPBP3-MTO1 complex composed of homodimers of GTPBP3 and MTO1. FAD serves as cofactor. Ubiquitously expressed in various tissues, but with markedly elevated expression in tissues of high metabolic rates.

Its subcellular location is the mitochondrion. It carries out the reaction 5,10-methylenetetrahydrofolate + uridine(34) in tRNA + taurine + GTP + A + H2O = 5-taurinomethyluridine(34) in tRNA + 7,8-dihydrofolate + GDP + AH2 + phosphate + H(+). Functionally, component of the GTPBP3-MTO1 complex that catalyzes the 5-taurinomethyluridine (taum(5)U) modification at the 34th wobble position (U34) of mitochondrial tRNAs (mt-tRNAs), which plays a role in mt-tRNA decoding and mitochondrial translation. Taum(5)U formation on mammalian mt-tRNA requires the presence of both GTPBP3-mediated GTPase activity and MTO1 catalytic activity. This chain is 5-taurinomethyluridine-[tRNA] synthase subunit MTO1, mitochondrial, found in Mus musculus (Mouse).